The following is a 348-amino-acid chain: Short-chain dehydrogenase fogG (348 aa).

Positions 51, 75, 100, and 126 each coordinate NADP(+). Residues S180 and Y215 each act as proton donor in the active site. Y215 and K219 together coordinate NADP(+). Catalysis depends on K219, which acts as the Lowers pKa of active site Tyr.

Belongs to the short-chain dehydrogenases/reductases (SDR) family.

Its pathway is secondary metabolite biosynthesis. Short-chain dehydrogenase; part of the gene cluster that mediates the biosynthesis of flavoglaucin and congeners (including aspergin, dihydroauroglaucin and auroglaucin), prenylated salicylaldehyde derivatives carrying a saturated or an unsaturated C-7 side chain. The PKS fogA releases the carboxylic acid (8E,10E,12E)-3,5,7-trihydroxytetradeca-8,10,12-trienoic acid as its product, as well as derivatives with one and two double bonds. FogA is indeed able to reduce the initial triketide, thus being at least partially responsible for the differently saturated heptyl side chains of flavoglaucin congeners. The oxidoreductases fogB, fogC and fogD modify the nascent polyketide in fogA-bound form and, together, fogA, fogB, fogC and fogD are necessary for the formation of the aromatic core and the cyclized PKS products are released as salicyl alcohols. In particular, fogB is responsible for oxidation of a hydroxyl group or reduction of remaining double bond(s) at the C-7 residue whereas fogD is probably involved in the reductive release of the modified PKS products. The cytochrome P450 monooxygenase fogE is then responsible for the hydroxylation at C-3 of the benzene ring. The fogE products are substrates of the prenyltransferase fogH and the prenylated benzyl alcohols are subsequently oxidized by the fogF to produce the final aryl aldehydes flavoglaucin and congeners. The short-chain dehydrogenase fogG does not seem to be involved in the biosynthesis of the prenylated salicylaldehyde derivatives. This chain is Short-chain dehydrogenase fogG, found in Aspergillus ruber (strain CBS 135680).